Reading from the N-terminus, the 350-residue chain is Nicotinate-nucleotide--dimethylbenzimidazole phosphoribosyltransferase (350 aa).

The Proton acceptor role is filled by Glu317.

Belongs to the CobT family.

It catalyses the reaction 5,6-dimethylbenzimidazole + nicotinate beta-D-ribonucleotide = alpha-ribazole 5'-phosphate + nicotinate + H(+). The protein operates within nucleoside biosynthesis; alpha-ribazole biosynthesis; alpha-ribazole from 5,6-dimethylbenzimidazole: step 1/2. In terms of biological role, catalyzes the synthesis of alpha-ribazole-5'-phosphate from nicotinate mononucleotide (NAMN) and 5,6-dimethylbenzimidazole (DMB). This is Nicotinate-nucleotide--dimethylbenzimidazole phosphoribosyltransferase from Shewanella oneidensis (strain ATCC 700550 / JCM 31522 / CIP 106686 / LMG 19005 / NCIMB 14063 / MR-1).